A 131-amino-acid chain; its full sequence is D-ribose pyranase (131 aa).

His-20 (proton donor) is an active-site residue. Residues Asp-28, His-98, and 120-122 (YAN) contribute to the substrate site.

The protein belongs to the RbsD / FucU family. RbsD subfamily. Homodecamer.

It localises to the cytoplasm. It catalyses the reaction beta-D-ribopyranose = beta-D-ribofuranose. Its pathway is carbohydrate metabolism; D-ribose degradation; D-ribose 5-phosphate from beta-D-ribopyranose: step 1/2. Catalyzes the interconversion of beta-pyran and beta-furan forms of D-ribose. This Enterococcus faecalis (strain ATCC 700802 / V583) protein is D-ribose pyranase.